The primary structure comprises 98 residues: Kunitz-type serine protease inhibitor kunitoxin-Phi1 (98 aa).

The N-terminal stretch at 1–23 is a signal peptide; sequence MWARVLLLGVLLSLLADLHAASG. The BPTI/Kunitz inhibitor domain occupies 39–89; sequence CELPPEKGPCNNLELRWFYNLKSKRCERFFYGGCYGNANNFKEINECDRRC. Cystine bridges form between Cys-39-Cys-89, Cys-48-Cys-72, and Cys-64-Cys-85.

This sequence belongs to the venom Kunitz-type family. Expressed by the venom gland.

The protein localises to the secreted. Its function is as follows. Serine protease inhibitor. This chain is Kunitz-type serine protease inhibitor kunitoxin-Phi1, found in Philodryas olfersii (Green snake).